We begin with the raw amino-acid sequence, 106 residues long: MSSAVDATGNPIPTSAVLTASAKHIGMRCMPENVAFLKCKKNDPNPEKCLDKGRDVTRCVLGLLKDLHQKCQKEMDDYVGCMYYYTNEFDLCRKEQEAFEKVCPLK.

Ser-2 carries the N-acetylserine modification. 2 consecutive CHCH domains span residues 26–67 (GMRC…LKDL) and 68–106 (HQKC…CPLK). 3 short sequence motifs (cx9C motif) span residues 29–39 (CMPENVAFLKC), 49–59 (CLDKGRDVTRC), and 71–81 (CQKEMDDYVGC). 4 disulfides stabilise this stretch: Cys-29–Cys-59, Cys-39–Cys-49, Cys-71–Cys-103, and Cys-81–Cys-92. A Cx10C motif motif is present at residues 92 to 103 (CRKEQEAFEKVC).

This sequence belongs to the complex I NDUFA8 subunit family. In terms of assembly, complex I is composed of at least 49 different subunits.

The protein resides in the mitochondrion. Its subcellular location is the mitochondrion intermembrane space. Accessory subunit of the mitochondrial membrane respiratory chain NADH dehydrogenase (Complex I), that is believed not to be involved in catalysis. Complex I functions in the transfer of electrons from NADH to the respiratory chain. The immediate electron acceptor for the enzyme is believed to be ubiquinone. This is NADH dehydrogenase [ubiquinone] 1 alpha subcomplex subunit 8-B from Arabidopsis thaliana (Mouse-ear cress).